The following is a 121-amino-acid chain: MDKTQSRLRRARQTRIKIAELQVARLAVHRTNTHIYAQVFSPCGTKVLASASTLEAEVRAELADKSGKGGNVAAATLIGKRIAEKAKAAGIESVAFDRSGFRYHGRVKALAEAAREAGLKF.

The protein belongs to the universal ribosomal protein uL18 family. In terms of assembly, part of the 50S ribosomal subunit; part of the 5S rRNA/L5/L18/L25 subcomplex. Contacts the 5S and 23S rRNAs.

Functionally, this is one of the proteins that bind and probably mediate the attachment of the 5S RNA into the large ribosomal subunit, where it forms part of the central protuberance. This is Large ribosomal subunit protein uL18 from Burkholderia multivorans (strain ATCC 17616 / 249).